The sequence spans 327 residues: Dolichyl-phosphate beta-glucosyltransferase ALG5D (327 aa).

At 1–6 (MEKQLA) the chain is on the lumenal side. Residues 7–27 (ELSVYILIIFLILGFIMAILM) traverse the membrane as a helical segment. Residues 28–327 (RFGDDTTLFD…NIWTIRDRKF (300 aa)) are Cytoplasmic-facing.

This sequence belongs to the glycosyltransferase 2 family.

It localises to the endoplasmic reticulum membrane. It catalyses the reaction a di-trans,poly-cis-dolichyl phosphate + UDP-alpha-D-glucose = a di-trans,poly-cis-dolichyl beta-D-glucosyl phosphate + UDP. Its pathway is protein modification; protein glycosylation. In terms of biological role, dolichyl-phosphate beta-glucosyltransferase involved in the glycosylation of glycoproteins through the synthesis of dolichyl beta-D-glucosyl phosphate which serves as a sugar donor for transfer of three glucose residues to the Man-9-GlcNAc-2-PP-dolichol precursor to N-glycans. The sequence is that of Dolichyl-phosphate beta-glucosyltransferase ALG5D from Trichomonas vaginalis (strain ATCC PRA-98 / G3).